A 278-amino-acid chain; its full sequence is Small ribosomal subunit protein uS5 (278 aa).

The segment at 1–43 is disordered; the sequence is MADAPAPAGGRGGFRGGFGGRGRGRGRGRGRGRGRGRGAKDGD. The span at 9–21 shows a compositional bias: gly residues; the sequence is GGRGGFRGGFGGR. Over residues 22 to 37 the composition is skewed to basic residues; it reads GRGRGRGRGRGRGRGR. The S5 DRBM domain maps to 88 to 151; it reads LKDEVLKIMP…ILAKLSVVPV (64 aa).

Belongs to the universal ribosomal protein uS5 family.

Functionally, component of the ribosome, a large ribonucleoprotein complex responsible for the synthesis of proteins in the cell. The small ribosomal subunit (SSU) binds messenger RNAs (mRNAs) and translates the encoded message by selecting cognate aminoacyl-transfer RNA (tRNA) molecules. The large subunit (LSU) contains the ribosomal catalytic site termed the peptidyl transferase center (PTC), which catalyzes the formation of peptide bonds, thereby polymerizing the amino acids delivered by tRNAs into a polypeptide chain. The nascent polypeptides leave the ribosome through a tunnel in the LSU and interact with protein factors that function in enzymatic processing, targeting, and the membrane insertion of nascent chains at the exit of the ribosomal tunnel. Plays a role in the assembly and function of the 40S ribosomal subunit. Mutations in this protein affects the control of translational fidelity. Involved in nucleolar processing of pre-18S ribosomal RNA and ribosome assembly. The sequence is that of Small ribosomal subunit protein uS5 (RPS2) from Urechis caupo (Innkeeper worm).